The primary structure comprises 348 residues: Peptide-N(4)-(N-acetyl-beta-glucosaminyl)asparagine amidase (348 aa).

Zn(2+)-binding residues include cysteine 116, cysteine 119, cysteine 151, and cysteine 154. Cysteine 177 serves as the catalytic Nucleophile. Residues histidine 204 and aspartate 221 contribute to the active site. Glutamate 224 contacts substrate. The segment at 311-348 is disordered; it reads PSATPTKEMQKLKISKTGNKGRISGSAEWKESRGENGK. Residues 338-348 show a composition bias toward basic and acidic residues; sequence EWKESRGENGK.

The protein belongs to the transglutaminase-like superfamily. PNGase family. It depends on Zn(2+) as a cofactor.

It is found in the cytoplasm. The enzyme catalyses Hydrolysis of an N(4)-(acetyl-beta-D-glucosaminyl)asparagine residue in which the glucosamine residue may be further glycosylated, to yield a (substituted) N-acetyl-beta-D-glucosaminylamine and a peptide containing an aspartate residue.. In terms of biological role, specifically deglycosylates the denatured form of N-linked glycoproteins in the cytoplasm and assists their proteasome-mediated degradation. Cleaves the beta-aspartyl-glucosamine (GlcNAc) of the glycan and the amide side chain of Asn, converting Asn to Asp. Prefers proteins containing high-mannose over those bearing complex type oligosaccharides. Can recognize misfolded proteins in the endoplasmic reticulum that are exported to the cytosol to be destroyed and deglycosylate them, while it has no activity toward native proteins. Deglycosylation is a prerequisite for subsequent proteasome-mediated degradation of some, but not all, misfolded glycoproteins. This Candida glabrata (strain ATCC 2001 / BCRC 20586 / JCM 3761 / NBRC 0622 / NRRL Y-65 / CBS 138) (Yeast) protein is Peptide-N(4)-(N-acetyl-beta-glucosaminyl)asparagine amidase (PNG1).